A 145-amino-acid polypeptide reads, in one-letter code: 3-dehydroquinate dehydratase (145 aa).

Tyrosine 23 acts as the Proton acceptor in catalysis. Substrate contacts are provided by asparagine 74, histidine 80, and aspartate 87. The active-site Proton donor is the histidine 100. Substrate-binding positions include 101–102 (IS) and arginine 111.

It belongs to the type-II 3-dehydroquinase family. Homododecamer.

The enzyme catalyses 3-dehydroquinate = 3-dehydroshikimate + H2O. The protein operates within metabolic intermediate biosynthesis; chorismate biosynthesis; chorismate from D-erythrose 4-phosphate and phosphoenolpyruvate: step 3/7. Its function is as follows. Catalyzes a trans-dehydration via an enolate intermediate. The polypeptide is 3-dehydroquinate dehydratase (Dictyoglomus turgidum (strain DSM 6724 / Z-1310)).